Consider the following 316-residue polypeptide: Pantothenate kinase (316 aa).

ATP is bound at residue 95–102 (GSVAVGKS).

The protein belongs to the prokaryotic pantothenate kinase family.

The protein resides in the cytoplasm. The catalysed reaction is (R)-pantothenate + ATP = (R)-4'-phosphopantothenate + ADP + H(+). Its pathway is cofactor biosynthesis; coenzyme A biosynthesis; CoA from (R)-pantothenate: step 1/5. In Hamiltonella defensa subsp. Acyrthosiphon pisum (strain 5AT), this protein is Pantothenate kinase.